A 292-amino-acid chain; its full sequence is Ribosomal RNA small subunit methyltransferase A (292 aa).

The S-adenosyl-L-methionine site is built by Asn28, Leu30, Gly55, Glu77, Asp103, and Asn123.

This sequence belongs to the class I-like SAM-binding methyltransferase superfamily. rRNA adenine N(6)-methyltransferase family. RsmA subfamily.

The protein localises to the cytoplasm. The enzyme catalyses adenosine(1518)/adenosine(1519) in 16S rRNA + 4 S-adenosyl-L-methionine = N(6)-dimethyladenosine(1518)/N(6)-dimethyladenosine(1519) in 16S rRNA + 4 S-adenosyl-L-homocysteine + 4 H(+). Functionally, specifically dimethylates two adjacent adenosines (A1518 and A1519) in the loop of a conserved hairpin near the 3'-end of 16S rRNA in the 30S particle. May play a critical role in biogenesis of 30S subunits. The chain is Ribosomal RNA small subunit methyltransferase A from Methylobacterium radiotolerans (strain ATCC 27329 / DSM 1819 / JCM 2831 / NBRC 15690 / NCIMB 10815 / 0-1).